The chain runs to 780 residues: Oocyte zinc finger protein XlCOF8.4 (780 aa).

15 C2H2-type zinc fingers span residues 250–272 (FPCSECGKCFAGSSELNVHRRTH), 278–300 (FSCSQCGKCFSNQTKLKYHHRTH), 306–328 (FSCSECGKCFSTPHVRARHQKTH), 334–356 (FPCSECGKCFARSSDVTVHRRTH), 362–384 (YSCSQCGKCFTRSSDLNVHRRTH), 390–412 (YSCSHCGKCFTTSSELNVHRRTH), 418–440 (YSCSECGKSFPTSSEFTSHWKTH), 446–468 (FSCVQCGKCFSKDTHLKYHYRTH), 474–496 (FSCFECGKCFTHNGSLKVHLKIH), 618–640 (LSCSECGKCFSTYHVLARHQKTH), 646–668 (FSCSECEKCYARSSDLNVHRRTH), 674–696 (YSCSECGKCFTRSSDFNVHRRTH), 702–724 (YSCSECGRCFPTSSVLTSHWRTH), 730–752 (FSCTECGKCFSRETYLKYHHRTH), and 758–780 (FSCSECGKCFTCNSSLKVHFQLH).

The protein belongs to the krueppel C2H2-type zinc-finger protein family.

The protein localises to the nucleus. In terms of biological role, may be involved in transcriptional regulation. This Xenopus laevis (African clawed frog) protein is Oocyte zinc finger protein XlCOF8.4.